The primary structure comprises 362 residues: Ferrochelatase (362 aa).

Histidine 228 and glutamate 309 together coordinate Fe cation.

It belongs to the ferrochelatase family.

Its subcellular location is the cytoplasm. It catalyses the reaction heme b + 2 H(+) = protoporphyrin IX + Fe(2+). The protein operates within porphyrin-containing compound metabolism; protoheme biosynthesis; protoheme from protoporphyrin-IX: step 1/1. Functionally, catalyzes the ferrous insertion into protoporphyrin IX. This Bordetella pertussis (strain Tohama I / ATCC BAA-589 / NCTC 13251) protein is Ferrochelatase.